A 113-amino-acid chain; its full sequence is Integration host factor subunit alpha (113 aa).

It belongs to the bacterial histone-like protein family. As to quaternary structure, heterodimer of an alpha and a beta chain.

This protein is one of the two subunits of integration host factor, a specific DNA-binding protein that functions in genetic recombination as well as in transcriptional and translational control. The protein is Integration host factor subunit alpha of Rhodopseudomonas palustris (strain BisA53).